The chain runs to 654 residues: Threonine--tRNA ligase (654 aa).

Positions Met1–Ala63 constitute a TGS domain. The catalytic stretch occupies residues Asp248–Pro546. Zn(2+) is bound by residues Cys342, His393, and His523.

This sequence belongs to the class-II aminoacyl-tRNA synthetase family. Homodimer. The cofactor is Zn(2+).

The protein localises to the cytoplasm. The enzyme catalyses tRNA(Thr) + L-threonine + ATP = L-threonyl-tRNA(Thr) + AMP + diphosphate + H(+). In terms of biological role, catalyzes the attachment of threonine to tRNA(Thr) in a two-step reaction: L-threonine is first activated by ATP to form Thr-AMP and then transferred to the acceptor end of tRNA(Thr). Also edits incorrectly charged L-seryl-tRNA(Thr). The sequence is that of Threonine--tRNA ligase from Lactiplantibacillus plantarum (strain ATCC BAA-793 / NCIMB 8826 / WCFS1) (Lactobacillus plantarum).